Here is a 180-residue protein sequence, read N- to C-terminus: Putative pre-16S rRNA nuclease (180 aa).

Positions 1–12 are enriched in basic and acidic residues; that stretch reads MDAQERSERPDP. The interval 1 to 23 is disordered; sequence MDAQERSERPDPATDPGRGRRLG.

This sequence belongs to the YqgF nuclease family.

It localises to the cytoplasm. Could be a nuclease involved in processing of the 5'-end of pre-16S rRNA. This chain is Putative pre-16S rRNA nuclease, found in Nocardia farcinica (strain IFM 10152).